Reading from the N-terminus, the 517-residue chain is MSPEAYVLFFNSFNLVTFEAFASVSLIIATVAFLLSPGGLAWAWTGSSKSRVSIPGPSGSLSVFSGSNPHRVLAALAKRFKASPLMAFSVGFSRFVISSEPETAKEILSSSAFADRPVKESAYELLFHRAMGFAPYGEYWRNLRRISSTHLFSPRRIASFEGVRVGIGMKMVKKIKSLVTSDACGEVEVKKIVHFGSLNNVMTTVFGESYDFDEVNGKGCFLERLVSEGYELLGIFNWSDHFWFLRWFDFQGVRKRCRALVSEVNTFVGGIIEKHKMKKGNNLNGEENDFVDVLLGLQKDEKLSDSDMIAVLWEMIFRGTDTVAILVEWVLARMVLHQDIQDKLYREIASATSNNIRSLSDSDIPKLPYLQAIVKETLRLHPPGPLLSWARLAIHDVHVGPNLVPAGTIAMVNMWSITHNAKIWTDPEAFMPERFISEDVSIMGSDLRLAPFGSGRRVCPGKAMGLATVHLWIGQLIQNFEWVKGSCDVELAEVLKLSMEMKNPLKCKAVPRNVGFA.

A helical transmembrane segment spans residues 20-40; that stretch reads AFASVSLIIATVAFLLSPGGL. Residue C459 participates in heme binding.

It belongs to the cytochrome P450 family. The cofactor is heme. As to expression, expressed in the periphery of the shoot apical meristem and inflorescence meristem, on the adaxial sides of developing floral organs and in developing ovules in the region where the integuments emerge.

It is found in the membrane. Functionally, plays a role in regulating directional growth at the meristem/organ boundary. Is required for the promotion of leaf and floral organ growth and for the prolongation of the plastochron. Promotes organ growth in a non-cell-autonomous manner and may generate a mobile growth signal distinct from the classical phytohormones that prevents premature arrest of proliferation, until the correct primordium size has been reached. Functions probably in association with CYP78A7 in regulating relative growth of the shoot apical meristem and plant organs. Is required locally in developing ovules to stimulates cell proliferation and promote seed growth. The chain is Cytochrome P450 78A5 (CYP78A5) from Arabidopsis thaliana (Mouse-ear cress).